The chain runs to 466 residues: Soluble pyridine nucleotide transhydrogenase (466 aa).

Position 36-45 (36-45 (ERYHNIGGGC)) interacts with FAD.

It belongs to the class-I pyridine nucleotide-disulfide oxidoreductase family. Requires FAD as cofactor.

The protein localises to the cytoplasm. The enzyme catalyses NAD(+) + NADPH = NADH + NADP(+). Functionally, conversion of NADPH, generated by peripheral catabolic pathways, to NADH, which can enter the respiratory chain for energy generation. This is Soluble pyridine nucleotide transhydrogenase from Erwinia tasmaniensis (strain DSM 17950 / CFBP 7177 / CIP 109463 / NCPPB 4357 / Et1/99).